We begin with the raw amino-acid sequence, 67 residues long: Conotoxin VnMMSK-03 (67 aa).

The signal sequence occupies residues methionine 1–alanine 20. A propeptide spanning residues leucine 21–valine 50 is cleaved from the precursor. 3 disulfides stabilise this stretch: cysteine 53–cysteine 65, cysteine 54–cysteine 61, and cysteine 58–cysteine 64. Proline 63 is subject to 4-hydroxyproline.

This sequence belongs to the conotoxin M superfamily. Expressed by the venom duct.

Its subcellular location is the secreted. The polypeptide is Conotoxin VnMMSK-03 (Conus ventricosus (Mediterranean cone)).